The following is a 216-amino-acid chain: Eukaryotic translation initiation factor isoform 4E-2 (216 aa).

Residues 1–23 (MAEVEAPATAVEAPAAAVATTTP) are disordered. An intrachain disulfide couples Cys-113 to Cys-152.

The protein belongs to the eukaryotic initiation factor 4E family. In terms of assembly, EIF4F is a multi-subunit complex, the composition of which varies with external and internal environmental conditions. It is composed of at least EIF4A, EIF4E and EIF4G. EIF4E is also known to interact with other partners. In higher plants two isoforms of EIF4F have been identified, named isoform EIF4F and isoform EIF(iso)4F. Isoform EIF4F has subunits p220 and p26, whereas isoform EIF(iso)4F has subunits p82 and p28. Post-translationally, according to the redox status, the Cys-113-Cys-152 disulfide bridge may have a role in regulating protein function by affecting its ability to bind capped mRNA.

Functionally, recognizes and binds the 7-methylguanosine-containing mRNA cap during an early step in the initiation of protein synthesis and facilitates ribosome binding by inducing the unwinding of the mRNAs secondary structures. The polypeptide is Eukaryotic translation initiation factor isoform 4E-2 (Zea mays (Maize)).